Here is a 171-residue protein sequence, read N- to C-terminus: MAELDIQISVDDIGWPGEETLLSFCERVLGAAVIYLRDSEKQPFPTMPPEVSLVFTDDASIQDINAEWRGKDKATNVLSFPAFPVRPGKMPGPMLGDIIIARETVERETIELEKSFDDHLTHLLVHGFLHLLGYDHMNSDEAEIMEGLETRILAQLGLSDPYEGQDLKMEP.

H126, H130, and H136 together coordinate Zn(2+).

Belongs to the endoribonuclease YbeY family. Zn(2+) is required as a cofactor.

Its subcellular location is the cytoplasm. Functionally, single strand-specific metallo-endoribonuclease involved in late-stage 70S ribosome quality control and in maturation of the 3' terminus of the 16S rRNA. This chain is Endoribonuclease YbeY, found in Rhizobium leguminosarum bv. trifolii (strain WSM2304).